The following is a 101-amino-acid chain: Small ribosomal subunit protein uS14 (101 aa).

Belongs to the universal ribosomal protein uS14 family. In terms of assembly, part of the 30S ribosomal subunit. Contacts proteins S3 and S10.

Binds 16S rRNA, required for the assembly of 30S particles and may also be responsible for determining the conformation of the 16S rRNA at the A site. This chain is Small ribosomal subunit protein uS14, found in Tropheryma whipplei (strain TW08/27) (Whipple's bacillus).